Reading from the N-terminus, the 602-residue chain is Elongation factor 4 (602 aa).

In terms of domain architecture, tr-type G spans 7–189; sequence SKIRNFCIIA…AIVRRVPAPQ (183 aa). GTP is bound by residues 19–24 and 136–139; these read DHGKST and NKVD.

This sequence belongs to the TRAFAC class translation factor GTPase superfamily. Classic translation factor GTPase family. LepA subfamily.

It is found in the cell inner membrane. It catalyses the reaction GTP + H2O = GDP + phosphate + H(+). Its function is as follows. Required for accurate and efficient protein synthesis under certain stress conditions. May act as a fidelity factor of the translation reaction, by catalyzing a one-codon backward translocation of tRNAs on improperly translocated ribosomes. Back-translocation proceeds from a post-translocation (POST) complex to a pre-translocation (PRE) complex, thus giving elongation factor G a second chance to translocate the tRNAs correctly. Binds to ribosomes in a GTP-dependent manner. This is Elongation factor 4 from Prochlorococcus marinus (strain MIT 9312).